The primary structure comprises 74 residues: UPF0435 protein BCB4264_A0471 (74 aa).

The protein belongs to the UPF0435 family.

The polypeptide is UPF0435 protein BCB4264_A0471 (Bacillus cereus (strain B4264)).